Here is a 79-residue protein sequence, read N- to C-terminus: uncharacterized protein (79 aa).

The tract at residues 20 to 52 is disordered; it reads TERGAGLSPAAPPDPSPAIAPTMAEGGVPSPGP.

This is an uncharacterized protein from Homo sapiens (Human).